Here is a 142-residue protein sequence, read N- to C-terminus: Transcription antitermination protein NusB (142 aa).

Belongs to the NusB family. In terms of assembly, monomer or homodimer; in equilibrium, with a preference for the monomer. Dimerization may be employed to package NusB in an inactive form until recruitment into antitermination complexes.

In terms of biological role, involved in transcription antitermination. Required for transcription of ribosomal RNA (rRNA) genes. Binds specifically to the boxA antiterminator sequence of the ribosomal RNA (rrn) operons. This Thermotoga maritima (strain ATCC 43589 / DSM 3109 / JCM 10099 / NBRC 100826 / MSB8) protein is Transcription antitermination protein NusB.